A 258-amino-acid polypeptide reads, in one-letter code: Glutamate racemase (258 aa).

Substrate is bound by residues 11–12 (DS) and 43–44 (YG). Cysteine 74 acts as the Proton donor/acceptor in catalysis. 75 to 76 (NT) lines the substrate pocket. The Proton donor/acceptor role is filled by cysteine 187. Substrate is bound at residue 188–189 (TH).

The protein belongs to the aspartate/glutamate racemases family.

The enzyme catalyses L-glutamate = D-glutamate. It participates in cell wall biogenesis; peptidoglycan biosynthesis. In terms of biological role, provides the (R)-glutamate required for cell wall biosynthesis. The polypeptide is Glutamate racemase (Bifidobacterium adolescentis (strain ATCC 15703 / DSM 20083 / NCTC 11814 / E194a)).